We begin with the raw amino-acid sequence, 293 residues long: TBC1 domain family member 7 (293 aa).

The Rab-GAP TBC domain occupies 50–231; sequence PLPSMYRALV…RVWDKVVSGS (182 aa).

In terms of assembly, component of the TSC-TBC complex (also named Rhebulator complex), composed of 2 molecules of TSC1, 2 molecules of TSC2 and 1 molecule of TBC1D7. Interacts with TSC1 (via C-terminal half of the coiled-coil domain). In terms of tissue distribution, highly expressed in heart, and slightly in kidney, liver and placenta.

It is found in the lysosome membrane. The protein resides in the cytoplasmic vesicle. It localises to the cytoplasm. The protein localises to the cytosol. Non-catalytic component of the TSC-TBC complex, a multiprotein complex that acts as a negative regulator of the canonical mTORC1 complex, an evolutionarily conserved central nutrient sensor that stimulates anabolic reactions and macromolecule biosynthesis to promote cellular biomass generation and growth. The TSC-TBC complex acts as a GTPase-activating protein (GAP) for the small GTPase RHEB, a direct activator of the protein kinase activity of mTORC1. In absence of nutrients, the TSC-TBC complex inhibits mTORC1, thereby preventing phosphorylation of ribosomal protein S6 kinase (RPS6KB1 and RPS6KB2) and EIF4EBP1 (4E-BP1) by the mTORC1 signaling. The TSC-TBC complex is inactivated in response to nutrients, relieving inhibition of mTORC1. This Homo sapiens (Human) protein is TBC1 domain family member 7.